Reading from the N-terminus, the 116-residue chain is MRHRCRVPQLGKAADQRKALLRSLTTELIRHGQIKTTKTRAKAVRSEVERMITLAKDGSLSARRRAIGYLYDKQLVHALFAEAPERYSNRKGGYTRIVRTLRRRGDNAEMAIIELM.

Belongs to the bacterial ribosomal protein bL17 family. In terms of assembly, part of the 50S ribosomal subunit. Contacts protein L32.

This chain is Large ribosomal subunit protein bL17, found in Crocosphaera subtropica (strain ATCC 51142 / BH68) (Cyanothece sp. (strain ATCC 51142)).